Consider the following 156-residue polypeptide: ATP synthase subunit b (156 aa).

The chain crosses the membrane as a helical span at residues 7 to 27; it reads LFAQIIVFFGLVWFTMKFVWP.

The protein belongs to the ATPase B chain family. In terms of assembly, F-type ATPases have 2 components, F(1) - the catalytic core - and F(0) - the membrane proton channel. F(1) has five subunits: alpha(3), beta(3), gamma(1), delta(1), epsilon(1). F(0) has three main subunits: a(1), b(2) and c(10-14). The alpha and beta chains form an alternating ring which encloses part of the gamma chain. F(1) is attached to F(0) by a central stalk formed by the gamma and epsilon chains, while a peripheral stalk is formed by the delta and b chains.

It localises to the cell inner membrane. In terms of biological role, f(1)F(0) ATP synthase produces ATP from ADP in the presence of a proton or sodium gradient. F-type ATPases consist of two structural domains, F(1) containing the extramembraneous catalytic core and F(0) containing the membrane proton channel, linked together by a central stalk and a peripheral stalk. During catalysis, ATP synthesis in the catalytic domain of F(1) is coupled via a rotary mechanism of the central stalk subunits to proton translocation. Component of the F(0) channel, it forms part of the peripheral stalk, linking F(1) to F(0). This is ATP synthase subunit b from Neisseria gonorrhoeae (strain NCCP11945).